Here is a 584-residue protein sequence, read N- to C-terminus: 2-isopropylmalate synthase (584 aa).

The Pyruvate carboxyltransferase domain occupies 45-323 (PRWLSTDLRD…SPNLDFSKLD (279 aa)). Residues aspartate 54, histidine 262, histidine 264, and asparagine 298 each contribute to the a divalent metal cation site.

It belongs to the alpha-IPM synthase/homocitrate synthase family. LeuA type 2 subfamily. As to quaternary structure, homodimer. A divalent metal cation serves as cofactor.

It carries out the reaction 3-methyl-2-oxobutanoate + acetyl-CoA + H2O = (2S)-2-isopropylmalate + CoA + H(+). It functions in the pathway amino-acid biosynthesis; L-leucine biosynthesis; L-leucine from 3-methyl-2-oxobutanoate: step 1/4. In terms of biological role, catalyzes the condensation of the acetyl group of acetyl-CoA with 3-methyl-2-oxobutanoate (2-oxoisovalerate) to form 3-carboxy-3-hydroxy-4-methylpentanoate (2-isopropylmalate). This Schizosaccharomyces pombe (strain 972 / ATCC 24843) (Fission yeast) protein is 2-isopropylmalate synthase (leu3).